A 333-amino-acid chain; its full sequence is Large ribosomal subunit protein uL3 (333 aa).

Basic residues-rich tracts occupy residues 1–10 (MGMKRNRPRR) and 17–26 (PRKRAKRPVP). Residues 1–29 (MGMKRNRPRRGSLAFSPRKRAKRPVPKIR) form a disordered region.

Belongs to the universal ribosomal protein uL3 family. In terms of assembly, part of the 50S ribosomal subunit. Forms a cluster with proteins L14 and L24e.

Functionally, one of the primary rRNA binding proteins, it binds directly near the 3'-end of the 23S rRNA, where it nucleates assembly of the 50S subunit. This Methanococcus aeolicus (strain ATCC BAA-1280 / DSM 17508 / OCM 812 / Nankai-3) protein is Large ribosomal subunit protein uL3.